A 133-amino-acid polypeptide reads, in one-letter code: MPFKRFVEIGRVALINYGKDYGRLVVIVDVIDQTRALVDAPDMERSPINFKRLSLTDLKIDIKRVPKKKDLIKALEAADVKNKWAKSSWGRKLIVKKTRAALNDFDRFKIMLAKIKRAAGVRQELAKLKKTAA.

The protein belongs to the eukaryotic ribosomal protein eL14 family.

The chain is Large ribosomal subunit protein eL14 from Pisum sativum (Garden pea).